A 487-amino-acid chain; its full sequence is Glutamyl-tRNA(Gln) amidotransferase subunit A (487 aa).

Catalysis depends on charge relay system residues K80 and S155. Residue S179 is the Acyl-ester intermediate of the active site.

The protein belongs to the amidase family. GatA subfamily. As to quaternary structure, heterotrimer of A, B and C subunits.

The catalysed reaction is L-glutamyl-tRNA(Gln) + L-glutamine + ATP + H2O = L-glutaminyl-tRNA(Gln) + L-glutamate + ADP + phosphate + H(+). Its function is as follows. Allows the formation of correctly charged Gln-tRNA(Gln) through the transamidation of misacylated Glu-tRNA(Gln) in organisms which lack glutaminyl-tRNA synthetase. The reaction takes place in the presence of glutamine and ATP through an activated gamma-phospho-Glu-tRNA(Gln). The protein is Glutamyl-tRNA(Gln) amidotransferase subunit A of Chloroflexus aurantiacus (strain ATCC 29366 / DSM 635 / J-10-fl).